Reading from the N-terminus, the 1017-residue chain is Fanconi-associated nuclease 1 (1017 aa).

Residues 1-10 (MMSEGKPPDK) are compositionally biased toward basic and acidic residues. Residues 1–23 (MMSEGKPPDKKRPRRSLSISKNK) form a disordered region. A compositionally biased stretch (basic residues) spans 11–23 (KRPRRSLSISKNK). Residues 14–22 (RRSLSISKN) carry the D-box motif. Residues 41-69 (KLACPVCSKMVPRYDLNRHLDEMCANNDF) form a UBZ4-type zinc finger. Zn(2+) contacts are provided by cysteine 44, cysteine 47, histidine 59, and cysteine 64. Disordered regions lie at residues 95–121 (EDVT…KREV) and 170–189 (IDKD…STVV). The span at 179-189 (SSPQSSKSTVV) shows a compositional bias: polar residues. Phosphoserine is present on serine 180. The short motif at 212–214 (KEN) is the KEN box element. The stretch at 671 to 696 (SRFVEILQRLHMYEEAVRELESLLSQ) forms a coiled coil. Glutamate 834, aspartate 960, glutamate 975, and valine 976 together coordinate Mn(2+). A VRR-NUC domain is found at 895–1007 (EESLRAWVAA…GAEVEVCHVV (113 aa)).

The protein belongs to the FAN1 family. In terms of assembly, interacts with FANCD2 (when monoubiquitinated). Interacts with FANCI, MLH1, MLH3 and PMS2. Mn(2+) serves as cofactor. It depends on Mg(2+) as a cofactor. Post-translationally, ubiquitinated and degraded during mitotic exit by the APC/C-Cdh1 complex.

Its subcellular location is the nucleus. It catalyses the reaction Hydrolytically removes 5'-nucleotides successively from the 3'-hydroxy termini of 3'-hydroxy-terminated oligonucleotides.. Nuclease required for the repair of DNA interstrand cross-links (ICL) recruited at sites of DNA damage by monoubiquitinated FANCD2. Specifically involved in repair of ICL-induced DNA breaks by being required for efficient homologous recombination, probably in the resolution of homologous recombination intermediates. Not involved in DNA double-strand breaks resection. Acts as a 5'-3' exonuclease that anchors at a cut end of DNA and cleaves DNA successively at every third nucleotide, allowing to excise an ICL from one strand through flanking incisions. Probably keeps excising with 3'-flap annealing until it reaches and unhooks the ICL. Acts at sites that have a 5'-terminal phosphate anchor at a nick or a 1- or 2-nucleotide flap and is augmented by a 3' flap. Also has endonuclease activity toward 5'-flaps. This chain is Fanconi-associated nuclease 1, found in Homo sapiens (Human).